The following is a 92-amino-acid chain: Small ribosomal subunit protein uS19c (92 aa).

It belongs to the universal ribosomal protein uS19 family.

The protein localises to the plastid. It is found in the chloroplast. Its function is as follows. Protein S19 forms a complex with S13 that binds strongly to the 16S ribosomal RNA. This is Small ribosomal subunit protein uS19c from Vitis vinifera (Grape).